A 116-amino-acid polypeptide reads, in one-letter code: Proline-rich protein 9 (116 aa).

This chain is Proline-rich protein 9 (PRR9), found in Bos taurus (Bovine).